The chain runs to 366 residues: Isocitrate dehydrogenase [NAD] subunit alpha, mitochondrial (366 aa).

The transit peptide at 1-27 (MAGPAWISKVSRLLGAFHNPKQVTRGF) directs the protein to the mitochondrion. N6-succinyllysine is present on lysine 77. The residue at position 101 (threonine 101) is a Phosphothreonine. Residues arginine 115, arginine 125, and arginine 146 each coordinate substrate. Lysine 223 bears the N6-acetyllysine mark. Mg(2+)-binding residues include aspartate 233, aspartate 257, and aspartate 261. At lysine 343 the chain carries N6-acetyllysine; alternate. An N6-succinyllysine; alternate modification is found at lysine 343. N6-succinyllysine is present on lysine 350.

It belongs to the isocitrate and isopropylmalate dehydrogenases family. As to quaternary structure, heterooligomer of subunits alpha (IDH3A), beta (IDH3B), and gamma (IDH3G) in the apparent ratio of 2:1:1. The heterodimer containing one IDH3A and one IDH3B subunit and the heterodimer containing one IDH3A and one IDH3G subunit assemble into a heterotetramer (which contains two subunits of IDH3A, one of IDH3B and one of IDH3G) and further into the heterooctamer. Mg(2+) serves as cofactor. The cofactor is Mn(2+).

It is found in the mitochondrion. It catalyses the reaction D-threo-isocitrate + NAD(+) = 2-oxoglutarate + CO2 + NADH. With respect to regulation, the heterotetramer and the heterodimer composed of IDH3A and IDH3G subunits can be allosterically activated by citrate (CIT) or/and ADP, and the two activators can act independently or synergistically. The heterodimer composed of IDH3A and IDH3B subunits cannot be allosterically regulated and the allosteric regulation of the heterotetramer is through the IDH3G subunit and not the IDH3B subunit. The IDH3G subunit contains the allosteric site which consists of a CIT-binding site and an ADP-binding site, and the binding of CIT and ADP causes conformational changes at the allosteric site which are transmitted to the active site in the catalytic subunit (IDH3A) through a cascade of conformational changes at the heterodimer interface, leading to stabilization of the isocitrate-binding at the active site and thus activation of the enzyme. ATP can activate the heterotetramer and the heterodimer composed of IDH3A and IDH3G subunits at low concentrations but inhibits their activities at high concentrations, whereas ATP exhibits only inhibitory effect on the heterodimer composed of IDH3A and IDH3B subunits. Catalytic subunit of the enzyme which catalyzes the decarboxylation of isocitrate (ICT) into alpha-ketoglutarate. The heterodimer composed of the alpha (IDH3A) and beta (IDH3B) subunits and the heterodimer composed of the alpha (IDH3A) and gamma (IDH3G) subunits, have considerable basal activity but the full activity of the heterotetramer (containing two subunits of IDH3A, one of IDH3B and one of IDH3G) requires the assembly and cooperative function of both heterodimers. This chain is Isocitrate dehydrogenase [NAD] subunit alpha, mitochondrial, found in Homo sapiens (Human).